The following is a 367-amino-acid chain: 3-isopropylmalate dehydrogenase (367 aa).

An NAD(+)-binding site is contributed by 75–88 (GPKWDGIERSKRPE). Arginine 95, arginine 105, arginine 133, and aspartate 230 together coordinate substrate. 3 residues coordinate Mg(2+): aspartate 230, aspartate 254, and aspartate 258. 288 to 300 (GSAPDIAGQDIAN) provides a ligand contact to NAD(+).

This sequence belongs to the isocitrate and isopropylmalate dehydrogenases family. LeuB type 1 subfamily. In terms of assembly, homodimer. Mg(2+) is required as a cofactor. It depends on Mn(2+) as a cofactor.

It is found in the cytoplasm. The catalysed reaction is (2R,3S)-3-isopropylmalate + NAD(+) = 4-methyl-2-oxopentanoate + CO2 + NADH. It participates in amino-acid biosynthesis; L-leucine biosynthesis; L-leucine from 3-methyl-2-oxobutanoate: step 3/4. Its function is as follows. Catalyzes the oxidation of 3-carboxy-2-hydroxy-4-methylpentanoate (3-isopropylmalate) to 3-carboxy-4-methyl-2-oxopentanoate. The product decarboxylates to 4-methyl-2 oxopentanoate. The sequence is that of 3-isopropylmalate dehydrogenase from Psychrobacter arcticus (strain DSM 17307 / VKM B-2377 / 273-4).